The primary structure comprises 78 residues: Major outer membrane lipoprotein Lpp (78 aa).

The N-terminal stretch at Met-1–Gly-20 is a signal peptide. A lipid anchor (N-palmitoyl cysteine) is attached at Cys-21. A lipid anchor (S-diacylglycerol cysteine) is attached at Cys-21. Repeats lie at residues Asn-24–Val-34 and Asn-38–Val-48. Residues Ile-27–Ala-75 adopt a coiled-coil conformation. Lys-78 is subject to N6-murein peptidoglycan lysine.

Belongs to the Lpp family. Homotrimer.

The protein localises to the cell outer membrane. It is found in the secreted. The protein resides in the cell wall. In terms of biological role, a highly abundant outer membrane lipoprotein that controls the distance between the inner and outer membranes. The only protein known to be covalently linked to the peptidoglycan network (PGN). Also non-covalently binds the PGN. The link between the cell outer membrane and PGN contributes to maintenance of the structural and functional integrity of the cell envelope, and maintains the correct distance between the PGN and the outer membrane. The protein is Major outer membrane lipoprotein Lpp of Yersinia pestis.